A 315-amino-acid chain; its full sequence is DNA-directed RNA polymerase subunit alpha (315 aa).

Residues 1-228 form an alpha N-terminal domain (alpha-NTD) region; the sequence is MLEIEKPKIE…EHFKLFMTLT (228 aa). Positions 245 to 315 are alpha C-terminal domain (alpha-CTD); that stretch reads KEKVLEMTIE…LELGLKQSEE (71 aa).

It belongs to the RNA polymerase alpha chain family. In terms of assembly, homodimer. The RNAP catalytic core consists of 2 alpha, 1 beta, 1 beta' and 1 omega subunit. When a sigma factor is associated with the core the holoenzyme is formed, which can initiate transcription.

The enzyme catalyses RNA(n) + a ribonucleoside 5'-triphosphate = RNA(n+1) + diphosphate. Its function is as follows. DNA-dependent RNA polymerase catalyzes the transcription of DNA into RNA using the four ribonucleoside triphosphates as substrates. The sequence is that of DNA-directed RNA polymerase subunit alpha from Clostridium tetani (strain Massachusetts / E88).